Reading from the N-terminus, the 142-residue chain is Large ribosomal subunit protein uL13 (142 aa).

The protein belongs to the universal ribosomal protein uL13 family. In terms of assembly, part of the 50S ribosomal subunit.

This protein is one of the early assembly proteins of the 50S ribosomal subunit, although it is not seen to bind rRNA by itself. It is important during the early stages of 50S assembly. This chain is Large ribosomal subunit protein uL13, found in Histophilus somni (strain 2336) (Haemophilus somnus).